The following is a 75-amino-acid chain: Small ribosomal subunit protein eS31 (75 aa).

Residues cysteine 41, cysteine 44, cysteine 60, and cysteine 63 each coordinate Zn(2+). The C4-type zinc-finger motif lies at 41–63 (CPRCGSIMAHHLKPNERWSCGKC).

The protein belongs to the eukaryotic ribosomal protein eS31 family. As to quaternary structure, part of the 30S ribosomal subunit. Zn(2+) serves as cofactor.

The protein is Small ribosomal subunit protein eS31 of Saccharolobus solfataricus (strain ATCC 35092 / DSM 1617 / JCM 11322 / P2) (Sulfolobus solfataricus).